Reading from the N-terminus, the 647-residue chain is Indolepyruvate oxidoreductase subunit IorA (647 aa).

2 4Fe-4S ferredoxin-type domains span residues 585–614 and 616–645; these read PIYH…WDPE and KKAK…PMKE. 8 residues coordinate [4Fe-4S] cluster: C594, C597, C600, C606, C625, C628, C631, and C635.

As to quaternary structure, heterodimer of the IorA and IorB subunits. The cofactor is [4Fe-4S] cluster.

The enzyme catalyses indole-3-pyruvate + 2 oxidized [2Fe-2S]-[ferredoxin] + CoA = (indol-3-yl)acetyl-CoA + 2 reduced [2Fe-2S]-[ferredoxin] + CO2 + H(+). Catalyzes the ferredoxin-dependent oxidative decarboxylation of arylpyruvates. This chain is Indolepyruvate oxidoreductase subunit IorA (iorA), found in Thermococcus kodakarensis (strain ATCC BAA-918 / JCM 12380 / KOD1) (Pyrococcus kodakaraensis (strain KOD1)).